We begin with the raw amino-acid sequence, 406 residues long: Arginine deiminase (406 aa).

Cys-396 serves as the catalytic Amidino-cysteine intermediate.

Belongs to the arginine deiminase family.

The protein localises to the cytoplasm. The enzyme catalyses L-arginine + H2O = L-citrulline + NH4(+). It functions in the pathway amino-acid degradation; L-arginine degradation via ADI pathway; carbamoyl phosphate from L-arginine: step 1/2. This is Arginine deiminase from Vibrio vulnificus (strain YJ016).